Consider the following 553-residue polypeptide: MGLRSTTLVLAATSSLLGGLIFGYELGIISGALLMLKTVFQLTCFEQEALVSAVLFGALLASLIGGFIIDRSGRRTSIMGSNLVVLAGSIILIATSSFWWLVVGRVTVGFAISISSMACCIYVSEIVRPHQRGTLVSLYETGITVGILISYAMNYFLSAVNDGWKYMFGLAIIPAAFQFIVILFLPSKPHTLNFWEQDSDNGFIELEEAGESGEFKPDTYDKQYTFLDLFRSKDNMRTRTLLGLGLVLFQQFTGQPNVLYYASTIFRSVGFQSNSSAVLASVGLGVVKVASTLIAICFADKAGRRILLLAGCIVMTIAISGIGIVSFMVELDSHRDCGSIRSKNTSYGDSNASQLLGIIHAGTPTINTKDNLAHQLAMVIQSPSLSNSAGSKHTASMFPNSTVPPAGPDSNYAILNWITLLSMMAFVSAFSIGFGPMTWLVLSEIYPADIRGRAFAFCNSFNWAANLLITLTFLEVIGSIGLGWTFLLYGGVGLLAIAFIYFFIPETKGQSLEEIDQQLSSKRISKRRETSKGVRKRPSTGPPYQRVGKSNWT.

Residues 1 to 15 (MGLRSTTLVLAATSS) are Cytoplasmic-facing. The chain crosses the membrane as a helical span at residues 16–36 (LLGGLIFGYELGIISGALLML). At 37-48 (KTVFQLTCFEQE) the chain is on the extracellular side. Residues 49–69 (ALVSAVLFGALLASLIGGFII) traverse the membrane as a helical segment. Topologically, residues 70 to 82 (DRSGRRTSIMGSN) are cytoplasmic. Residues 83-103 (LVVLAGSIILIATSSFWWLVV) traverse the membrane as a helical segment. Residues 104-105 (GR) lie on the Extracellular side of the membrane. A helical membrane pass occupies residues 106-126 (VTVGFAISISSMACCIYVSEI). At 127 to 132 (VRPHQR) the chain is on the cytoplasmic side. The chain crosses the membrane as a helical span at residues 133–153 (GTLVSLYETGITVGILISYAM). Topologically, residues 154–165 (NYFLSAVNDGWK) are extracellular. The helical transmembrane segment at 166 to 186 (YMFGLAIIPAAFQFIVILFLP) threads the bilayer. Over 187–240 (SKPHTLNFWEQDSDNGFIELEEAGESGEFKPDTYDKQYTFLDLFRSKDNMRTRT) the chain is Cytoplasmic. A helical membrane pass occupies residues 241 to 261 (LLGLGLVLFQQFTGQPNVLYY). 250–251 (QQ) provides a ligand contact to D-glucose. At 262–277 (ASTIFRSVGFQSNSSA) the chain is on the extracellular side. An N-linked (GlcNAc...) asparagine glycan is attached at asparagine 274. A helical transmembrane segment spans residues 278 to 298 (VLASVGLGVVKVASTLIAICF). Topologically, residues 299 to 305 (ADKAGRR) are cytoplasmic. The chain crosses the membrane as a helical span at residues 306 to 326 (ILLLAGCIVMTIAISGIGIVS). Topologically, residues 327 to 413 (FMVELDSHRD…PPAGPDSNYA (87 aa)) are extracellular. N-linked (GlcNAc...) asparagine glycans are attached at residues asparagine 344, asparagine 351, and asparagine 400. Residues 414–434 (ILNWITLLSMMAFVSAFSIGF) traverse the membrane as a helical segment. At 435–462 (GPMTWLVLSEIYPADIRGRAFAFCNSFN) the chain is on the cytoplasmic side. Tryptophan 439 contributes to the D-glucose binding site. A helical transmembrane segment spans residues 463-482 (WAANLLITLTFLEVIGSIGL). A topological domain (extracellular) is located at residue glycine 483. The chain crosses the membrane as a helical span at residues 484–504 (WTFLLYGGVGLLAIAFIYFFI). The Cytoplasmic segment spans residues 505–553 (PETKGQSLEEIDQQLSSKRISKRRETSKGVRKRPSTGPPYQRVGKSNWT). The interval 522–553 (KRISKRRETSKGVRKRPSTGPPYQRVGKSNWT) is disordered.

Belongs to the major facilitator superfamily. Sugar transporter (TC 2.A.1.1) family. Glucose transporter subfamily.

It localises to the endomembrane system. The protein resides in the cytoplasm. It is found in the perinuclear region. The enzyme catalyses D-glucose(out) = D-glucose(in). Its function is as follows. Facilitative glucose transporter required for the development of the cardiovascular system. The protein is Solute carrier family 2, facilitated glucose transporter member 10 of Xenopus laevis (African clawed frog).